A 57-amino-acid chain; its full sequence is Large ribosomal subunit protein bL32 (57 aa).

Basic residues predominate over residues Met-1–Gln-19. The segment at Met-1–Lys-21 is disordered.

The protein belongs to the bacterial ribosomal protein bL32 family.

In Mycobacteroides abscessus (strain ATCC 19977 / DSM 44196 / CCUG 20993 / CIP 104536 / JCM 13569 / NCTC 13031 / TMC 1543 / L948) (Mycobacterium abscessus), this protein is Large ribosomal subunit protein bL32.